A 208-amino-acid polypeptide reads, in one-letter code: Holliday junction branch migration complex subunit RuvA (208 aa).

Residues 1-64 (MIGRLHGTVA…DDGQALYGFA (64 aa)) form a domain I region. The tract at residues 65 to 143 (SRAERDLFRV…GLLPAASGGV (79 aa)) is domain II. Positions 139–162 (ASGGVPARTGSGEQLDAPAGPQGS) are disordered. The segment at 144–157 (PARTGSGEQLDAPA) is flexible linker. Residues 158 to 208 (GPQGSREDAVSALVALGYKPAEAGRLVNAVPGANDLPSEELIRRALQAAVR) are domain III.

Belongs to the RuvA family. In terms of assembly, homotetramer. Forms an RuvA(8)-RuvB(12)-Holliday junction (HJ) complex. HJ DNA is sandwiched between 2 RuvA tetramers; dsDNA enters through RuvA and exits via RuvB. An RuvB hexamer assembles on each DNA strand where it exits the tetramer. Each RuvB hexamer is contacted by two RuvA subunits (via domain III) on 2 adjacent RuvB subunits; this complex drives branch migration. In the full resolvosome a probable DNA-RuvA(4)-RuvB(12)-RuvC(2) complex forms which resolves the HJ.

The protein resides in the cytoplasm. Its function is as follows. The RuvA-RuvB-RuvC complex processes Holliday junction (HJ) DNA during genetic recombination and DNA repair, while the RuvA-RuvB complex plays an important role in the rescue of blocked DNA replication forks via replication fork reversal (RFR). RuvA specifically binds to HJ cruciform DNA, conferring on it an open structure. The RuvB hexamer acts as an ATP-dependent pump, pulling dsDNA into and through the RuvAB complex. HJ branch migration allows RuvC to scan DNA until it finds its consensus sequence, where it cleaves and resolves the cruciform DNA. This chain is Holliday junction branch migration complex subunit RuvA, found in Alkalilimnicola ehrlichii (strain ATCC BAA-1101 / DSM 17681 / MLHE-1).